We begin with the raw amino-acid sequence, 176 residues long: Lipoprotein signal peptidase (176 aa).

4 consecutive transmembrane segments (helical) span residues 10–30, 48–68, 78–98, and 102–122; these read LFQFYPHNLIWLGLSVLAIVL, VPVLPFLNWTLLHNYGAAFSF, YFFTSLAGLVSILFVFWLLRM, and MVVLPVAIALILGGALGNLID. Residues Asp131 and Asp149 contribute to the active site. Residues 141 to 161 form a helical membrane-spanning segment; it reads HFPAFNIADSAITLGTILLLI.

The protein belongs to the peptidase A8 family.

It localises to the cell inner membrane. It carries out the reaction Release of signal peptides from bacterial membrane prolipoproteins. Hydrolyzes -Xaa-Yaa-Zaa-|-(S,diacylglyceryl)Cys-, in which Xaa is hydrophobic (preferably Leu), and Yaa (Ala or Ser) and Zaa (Gly or Ala) have small, neutral side chains.. The protein operates within protein modification; lipoprotein biosynthesis (signal peptide cleavage). Its function is as follows. This protein specifically catalyzes the removal of signal peptides from prolipoproteins. In Acinetobacter baumannii (strain SDF), this protein is Lipoprotein signal peptidase.